Reading from the N-terminus, the 176-residue chain is ATP synthase subunit b (176 aa).

A helical membrane pass occupies residues 7 to 27; it reads IQIPDGSAIFVLLTFILLMFI. A disordered region spans residues 75-94; it reads SQSQATALMENARKSSEEQS. The segment covering 85 to 94 has biased composition (basic and acidic residues); the sequence is NARKSSEEQS.

The protein belongs to the ATPase B chain family. In terms of assembly, F-type ATPases have 2 components, F(1) - the catalytic core - and F(0) - the membrane proton channel. F(1) has five subunits: alpha(3), beta(3), gamma(1), delta(1), epsilon(1). F(0) has three main subunits: a(1), b(2) and c(10-14). The alpha and beta chains form an alternating ring which encloses part of the gamma chain. F(1) is attached to F(0) by a central stalk formed by the gamma and epsilon chains, while a peripheral stalk is formed by the delta and b chains.

Its subcellular location is the cell membrane. In terms of biological role, f(1)F(0) ATP synthase produces ATP from ADP in the presence of a proton or sodium gradient. F-type ATPases consist of two structural domains, F(1) containing the extramembraneous catalytic core and F(0) containing the membrane proton channel, linked together by a central stalk and a peripheral stalk. During catalysis, ATP synthesis in the catalytic domain of F(1) is coupled via a rotary mechanism of the central stalk subunits to proton translocation. Its function is as follows. Component of the F(0) channel, it forms part of the peripheral stalk, linking F(1) to F(0). In Oenococcus oeni (strain ATCC BAA-331 / PSU-1), this protein is ATP synthase subunit b.